Here is a 314-residue protein sequence, read N- to C-terminus: 4-hydroxy-3-methylbut-2-enyl diphosphate reductase (314 aa).

Cysteine 12 serves as a coordination point for [4Fe-4S] cluster. (2E)-4-hydroxy-3-methylbut-2-enyl diphosphate contacts are provided by histidine 41 and histidine 74. Dimethylallyl diphosphate contacts are provided by histidine 41 and histidine 74. Isopentenyl diphosphate contacts are provided by histidine 41 and histidine 74. Cysteine 96 lines the [4Fe-4S] cluster pocket. Histidine 124 contacts (2E)-4-hydroxy-3-methylbut-2-enyl diphosphate. Histidine 124 lines the dimethylallyl diphosphate pocket. Histidine 124 contacts isopentenyl diphosphate. The active-site Proton donor is glutamate 126. Residue threonine 167 participates in (2E)-4-hydroxy-3-methylbut-2-enyl diphosphate binding. Cysteine 197 contacts [4Fe-4S] cluster. Positions 225, 226, 227, and 269 each coordinate (2E)-4-hydroxy-3-methylbut-2-enyl diphosphate. Residues serine 225, serine 226, asparagine 227, and serine 269 each contribute to the dimethylallyl diphosphate site. Isopentenyl diphosphate-binding residues include serine 225, serine 226, asparagine 227, and serine 269.

The protein belongs to the IspH family. [4Fe-4S] cluster serves as cofactor.

It carries out the reaction isopentenyl diphosphate + 2 oxidized [2Fe-2S]-[ferredoxin] + H2O = (2E)-4-hydroxy-3-methylbut-2-enyl diphosphate + 2 reduced [2Fe-2S]-[ferredoxin] + 2 H(+). It catalyses the reaction dimethylallyl diphosphate + 2 oxidized [2Fe-2S]-[ferredoxin] + H2O = (2E)-4-hydroxy-3-methylbut-2-enyl diphosphate + 2 reduced [2Fe-2S]-[ferredoxin] + 2 H(+). The protein operates within isoprenoid biosynthesis; dimethylallyl diphosphate biosynthesis; dimethylallyl diphosphate from (2E)-4-hydroxy-3-methylbutenyl diphosphate: step 1/1. Its pathway is isoprenoid biosynthesis; isopentenyl diphosphate biosynthesis via DXP pathway; isopentenyl diphosphate from 1-deoxy-D-xylulose 5-phosphate: step 6/6. Its function is as follows. Catalyzes the conversion of 1-hydroxy-2-methyl-2-(E)-butenyl 4-diphosphate (HMBPP) into a mixture of isopentenyl diphosphate (IPP) and dimethylallyl diphosphate (DMAPP). Acts in the terminal step of the DOXP/MEP pathway for isoprenoid precursor biosynthesis. In Actinobacillus pleuropneumoniae serotype 5b (strain L20), this protein is 4-hydroxy-3-methylbut-2-enyl diphosphate reductase.